The following is a 411-amino-acid chain: Elongation factor Tu, apicoplast (411 aa).

One can recognise a tr-type G domain in the interval K10–E214. Positions G19–T26 are G1. G19 to T26 contributes to the GTP binding site. T26 contributes to the Mg(2+) binding site. Residues G61–N65 are G2. Residues D82–G85 form a G3 region. GTP-binding positions include D82 to H86 and N137 to D140. The G4 stretch occupies residues N137 to D140. Positions S175 to L177 are G5.

It belongs to the TRAFAC class translation factor GTPase superfamily. Classic translation factor GTPase family. EF-Tu/EF-1A subfamily.

Its subcellular location is the plastid. The protein localises to the apicoplast. It catalyses the reaction GTP + H2O = GDP + phosphate + H(+). GTP hydrolase that promotes the GTP-dependent binding of aminoacyl-tRNA to the A-site of ribosomes during protein biosynthesis. In Theileria parva (East coast fever infection agent), this protein is Elongation factor Tu, apicoplast (tufA).